Here is a 425-residue protein sequence, read N- to C-terminus: NAD kinase 2, mitochondrial (425 aa).

Residues 1–45 (MDTSAIQQTLVKIYQRQAWQPPRKASKNETTVGKPRELAGGGSPA) constitute a mitochondrion transit peptide. The segment at 20–46 (QPPRKASKNETTVGKPRELAGGGSPAD) is disordered. The residue at position 59 (lysine 59) is an N6-acetyllysine; alternate. Residue lysine 59 is modified to N6-succinyllysine; alternate. Position 171 is a phosphoserine (serine 171). Lysine 285 carries the post-translational modification N6-succinyllysine. N6-acetyllysine; alternate is present on lysine 300. Lysine 300 carries the N6-succinyllysine; alternate modification. Position 350 is a phosphoserine (serine 350). An N6-acetyllysine modification is found at lysine 380.

It belongs to the NAD kinase family. In terms of assembly, homodimer.

It localises to the mitochondrion. It carries out the reaction NAD(+) + ATP = ADP + NADP(+) + H(+). Its activity is regulated as follows. Inhibited by NADH, NADPH and NADP(+). In terms of biological role, mitochondrial NAD(+) kinase that phosphorylates NAD(+) to yield NADP(+). Can use both ATP or inorganic polyphosphate as the phosphoryl donor. This Rattus norvegicus (Rat) protein is NAD kinase 2, mitochondrial (Nadk2).